Reading from the N-terminus, the 564-residue chain is Type 2 DNA topoisomerase 6 subunit B (564 aa).

ATP is bound by residues asparagine 46, aspartate 78, 99–100 (TK), 109–116 (GQQGIGIS), and lysine 471.

This sequence belongs to the TOP6B family. Homodimer. Heterotetramer of two Top6A and two Top6B chains.

It catalyses the reaction ATP-dependent breakage, passage and rejoining of double-stranded DNA.. In terms of biological role, relaxes both positive and negative superturns and exhibits a strong decatenase activity. This Pyrococcus horikoshii (strain ATCC 700860 / DSM 12428 / JCM 9974 / NBRC 100139 / OT-3) protein is Type 2 DNA topoisomerase 6 subunit B.